Here is a 375-residue protein sequence, read N- to C-terminus: Alanine racemase (375 aa).

K45 acts as the Proton acceptor; specific for D-alanine in catalysis. K45 is subject to N6-(pyridoxal phosphate)lysine. R141 is a substrate binding site. Catalysis depends on Y270, which acts as the Proton acceptor; specific for L-alanine. M318 contacts substrate.

This sequence belongs to the alanine racemase family. It depends on pyridoxal 5'-phosphate as a cofactor.

The enzyme catalyses L-alanine = D-alanine. Its pathway is amino-acid biosynthesis; D-alanine biosynthesis; D-alanine from L-alanine: step 1/1. Functionally, catalyzes the interconversion of L-alanine and D-alanine. May also act on other amino acids. The chain is Alanine racemase (alr) from Pseudoalteromonas atlantica (strain T6c / ATCC BAA-1087).